The following is a 291-amino-acid chain: Gamma-soluble NSF attachment protein (291 aa).

It belongs to the SNAP family.

The protein localises to the membrane. In terms of biological role, required for vesicular transport between the endoplasmic reticulum and the Golgi apparatus. Binds to SNARE complex and then recruits NSF to disassemble it. In Arabidopsis thaliana (Mouse-ear cress), this protein is Gamma-soluble NSF attachment protein (GSNAP).